Consider the following 187-residue polypeptide: ATP synthase subunit b (187 aa).

The helical transmembrane segment at 4-24 (LALFALLMVPAILLASGHDSG) threads the bilayer.

This sequence belongs to the ATPase B chain family. F-type ATPases have 2 components, F(1) - the catalytic core - and F(0) - the membrane proton channel. F(1) has five subunits: alpha(3), beta(3), gamma(1), delta(1), epsilon(1). F(0) has three main subunits: a(1), b(2) and c(10-14). The alpha and beta chains form an alternating ring which encloses part of the gamma chain. F(1) is attached to F(0) by a central stalk formed by the gamma and epsilon chains, while a peripheral stalk is formed by the delta and b chains.

It localises to the cell inner membrane. Functionally, f(1)F(0) ATP synthase produces ATP from ADP in the presence of a proton or sodium gradient. F-type ATPases consist of two structural domains, F(1) containing the extramembraneous catalytic core and F(0) containing the membrane proton channel, linked together by a central stalk and a peripheral stalk. During catalysis, ATP synthesis in the catalytic domain of F(1) is coupled via a rotary mechanism of the central stalk subunits to proton translocation. Component of the F(0) channel, it forms part of the peripheral stalk, linking F(1) to F(0). This chain is ATP synthase subunit b, found in Sulfurovum sp. (strain NBC37-1).